The chain runs to 357 residues: Histidinol-phosphate aminotransferase (357 aa).

Position 221 is an N6-(pyridoxal phosphate)lysine (Lys221).

This sequence belongs to the class-II pyridoxal-phosphate-dependent aminotransferase family. Histidinol-phosphate aminotransferase subfamily. Pyridoxal 5'-phosphate serves as cofactor.

The enzyme catalyses L-histidinol phosphate + 2-oxoglutarate = 3-(imidazol-4-yl)-2-oxopropyl phosphate + L-glutamate. It functions in the pathway amino-acid biosynthesis; L-histidine biosynthesis; L-histidine from 5-phospho-alpha-D-ribose 1-diphosphate: step 7/9. This is Histidinol-phosphate aminotransferase (hisC) from Sulfurisphaera tokodaii (strain DSM 16993 / JCM 10545 / NBRC 100140 / 7) (Sulfolobus tokodaii).